A 475-amino-acid polypeptide reads, in one-letter code: MSDIEQERWSRVKGRLRSTVGEDIYSSWFARMDLESVHGESVRMSVPTRFLKSWIQAHYAERVLACWQAELPDVHRIDLMVRSAMRCAAPAKEAPAADPRRPEHGDGRASTELKMVATAPASANHDALGGSPLDPRLTFASFVTGRSNTLAHAAARQVAEGRRGDSIMFNPLYIHAGVGLGKTHLLQAVTWAGNAGTERKVLYLTAEKFMYGFVAALKSQTALAFKEALRGIDVLVIDDLQFLQGKSTQAEFCHTLNALIDAGRQVVVAADRPPSDLESLDDRVRSRLAGGLVVEMGSLGEELRLGILKSRIEVARAHHASFSVPEPVLDYLAKAITHNGRDLEGAINRLLAHSKLNAQPVTLEMAEREVRDLIRPQEPRRIKIEDIQRVVARQYNVSRSDLLSSRRTANVVRPRQVAMYLAKTLTLRSLPEIGRRFGGRDHTTVLHAVRKIEALVSKDTTLSDEVELLKRQLQE.

The tract at residues 1-73 is domain I, interacts with DnaA modulators; it reads MSDIEQERWS…LACWQAELPD (73 aa). The interval 73-131 is domain II; the sequence is DVHRIDLMVRSAMRCAAPAKEAPAADPRRPEHGDGRASTELKMVATAPASANHDALGGS. The interval 132–354 is domain III, AAA+ region; the sequence is PLDPRLTFAS…GAINRLLAHS (223 aa). ATP-binding residues include Gly-179, Gly-181, Lys-182, and Thr-183. Residues 355-475 are domain IV, binds dsDNA; sequence KLNAQPVTLE…VELLKRQLQE (121 aa).

It belongs to the DnaA family. Oligomerizes as a right-handed, spiral filament on DNA at oriC.

It is found in the cytoplasm. In terms of biological role, plays an essential role in the initiation and regulation of chromosomal replication. ATP-DnaA binds to the origin of replication (oriC) to initiate formation of the DNA replication initiation complex once per cell cycle. Binds the DnaA box (a 9 base pair repeat at the origin) and separates the double-stranded (ds)DNA. Forms a right-handed helical filament on oriC DNA; dsDNA binds to the exterior of the filament while single-stranded (ss)DNA is stabiized in the filament's interior. The ATP-DnaA-oriC complex binds and stabilizes one strand of the AT-rich DNA unwinding element (DUE), permitting loading of DNA polymerase. After initiation quickly degrades to an ADP-DnaA complex that is not apt for DNA replication. Binds acidic phospholipids. This is Chromosomal replication initiator protein DnaA from Nitrobacter hamburgensis (strain DSM 10229 / NCIMB 13809 / X14).